The chain runs to 446 residues: Alpha-1,6-mannosyl-glycoprotein 2-beta-N-acetylglucosaminyltransferase (446 aa).

The Cytoplasmic segment spans residues 1 to 9 (MRFRIYKRK). The helical; Signal-anchor for type II membrane protein transmembrane segment at 10–29 (VLILTFVVAACGFVLWSSNG) threads the bilayer. Over 30-446 (RQRKNEALAP…ELCKSYRRLQ (417 aa)) the chain is Lumenal. N-linked (GlcNAc...) asparagine glycans are attached at residues asparagine 69 and asparagine 86. Substrate contacts are provided by residues 123–127 (QVHNR) and aspartate 154. Cysteine 196 and cysteine 210 form a disulfide bridge. 229–233 (QTKHH) contributes to the substrate binding site. Aspartate 261 is a Mn(2+) binding site. Residues cysteine 283 and cysteine 286 are joined by a disulfide bond. Residue arginine 298 coordinates substrate. Intrachain disulfides connect cysteine 334–cysteine 357, cysteine 339–cysteine 439, and cysteine 378–cysteine 386. Histidine 374 is a Mn(2+) binding site.

This sequence belongs to the glycosyltransferase 16 (GT16) protein family. Homodimer. Mn(2+) is required as a cofactor.

The protein localises to the golgi apparatus membrane. It carries out the reaction an N(4)-{beta-D-GlcNAc-(1-&gt;2)-alpha-D-Man-(1-&gt;3)-[alpha-D-Man-(1-&gt;6)]-beta-D-Man-(1-&gt;4)-beta-D-GlcNAc-(1-&gt;4)-beta-D-GlcNAc}-L-asparaginyl-[protein] + UDP-N-acetyl-alpha-D-glucosamine = N(4)-{beta-D-GlcNAc-(1-&gt;2)-alpha-D-Man-(1-&gt;3)-[beta-D-GlcNAc-(1-&gt;2)-alpha-D-Man-(1-&gt;6)]-beta-D-Man-(1-&gt;4)-beta-D-GlcNAc-(1-&gt;4)-beta-D-GlcNAc}-L-asparaginyl-[protein] + UDP + H(+). The protein operates within protein modification; protein glycosylation. Its function is as follows. Plays an essential role in protein N-glycosylation. Catalyzes the transfer of N-acetylglucosamine (GlcNAc) onto the free terminal mannose moiety in the core structure of the nascent N-linked glycan chain, giving rise to the second branch in complex glycans. This is Alpha-1,6-mannosyl-glycoprotein 2-beta-N-acetylglucosaminyltransferase (MGAT2) from Sus scrofa (Pig).